Reading from the N-terminus, the 207-residue chain is Superoxide dismutase [Mn] (207 aa).

The Mn(2+) site is built by His30, His78, Asp166, and His170.

This sequence belongs to the iron/manganese superoxide dismutase family. Homodimer. It depends on Mn(2+) as a cofactor.

The enzyme catalyses 2 superoxide + 2 H(+) = H2O2 + O2. Functionally, destroys superoxide anion radicals which are normally produced within the cells and which are toxic to biological systems. This is Superoxide dismutase [Mn] (sodA) from Chlamydia pneumoniae (Chlamydophila pneumoniae).